The following is a 120-amino-acid chain: Glycine cleavage system H protein (120 aa).

The region spanning 17–99 is the Lipoyl-binding domain; it reads VATVGITEHA…QGAAWFFKLK (83 aa). Lys-58 carries the post-translational modification N6-lipoyllysine.

This sequence belongs to the GcvH family. The glycine cleavage system is composed of four proteins: P, T, L and H. The cofactor is (R)-lipoate.

Its function is as follows. The glycine cleavage system catalyzes the degradation of glycine. The H protein shuttles the methylamine group of glycine from the P protein to the T protein. This chain is Glycine cleavage system H protein, found in Sinorhizobium medicae (strain WSM419) (Ensifer medicae).